We begin with the raw amino-acid sequence, 793 residues long: Outer membrane protein assembly factor BamA (793 aa).

The signal sequence occupies residues 1–19; it reads MKKLLIASLLFGTTTTVFA. POTRA domains are found at residues 22–89, 90–170, 173–259, 262–341, and 344–418; these read FVAK…VVAK, SIIS…INED, AKLA…VNEG, YDLR…VDAG, and LTVR…VKER.

This sequence belongs to the BamA family. As to quaternary structure, part of the Bam complex.

The protein localises to the cell outer membrane. In terms of biological role, part of the outer membrane protein assembly complex, which is involved in assembly and insertion of beta-barrel proteins into the outer membrane. The protein is Outer membrane protein assembly factor BamA of Haemophilus influenzae.